A 293-amino-acid chain; its full sequence is MATNESVSIFSSASLAVEYVDSLLPENPLQEPFKNAWNYMLNNYTKFQIATWGSLIVHEALYFSFCLPGFLFQFIPYMKKYKIQKDKPETWENQWKCFKVLLFNHFCIQLPLICGTYYFTEYFNIPYDWERMPRWYFLLARCFGCAVIEDTWHYFMHRLLHHKRIYKYIHKVHHEFQAPFGMEAEYAHPLETLILGTGFFIGIVLLCDHVILLWAWVTIRLLETIDVHSGYDIPLNPLNLIPFYAGSRHHDFHHMNFIGNYASTFTWWDRIFGTDSQYHAYYEKKKKFEKKTE.

2 consecutive transmembrane segments (helical) span residues 55–75 (LIVH…FQFI) and 100–120 (VLLF…YYFT). In terms of domain architecture, Fatty acid hydroxylase spans 145–274 (CAVIEDTWHY…FTWWDRIFGT (130 aa)). The short motif at 157–161 (HRLLH) is the Histidine box-1 element. The short motif at 170–174 (HKVHH) is the Histidine box-2 element. Residues 199–219 (FFIGIVLLCDHVILLWAWVTI) form a helical membrane-spanning segment. The Histidine box-3 signature appears at 249 to 255 (HHDFHHM).

This sequence belongs to the sterol desaturase family. Requires Fe cation as cofactor. In terms of processing, ubiquitinated by MARCHF6, leading to proteasomal degradation.

It localises to the endoplasmic reticulum membrane. It carries out the reaction 4,4-dimethyl-5alpha-cholest-7-en-3beta-ol + 6 Fe(II)-[cytochrome b5] + 3 O2 + 5 H(+) = 4alpha-carboxy-4beta-methyl-5alpha-cholest-7-ene-3beta-ol + 6 Fe(III)-[cytochrome b5] + 4 H2O. The enzyme catalyses 4,4-dimethyl-5alpha-cholesta-8,24-dien-3beta-ol + 6 Fe(II)-[cytochrome b5] + 3 O2 + 5 H(+) = 4beta-methylzymosterol-4alpha-carboxylate + 6 Fe(III)-[cytochrome b5] + 4 H2O. It catalyses the reaction 4alpha-methylzymosterol + 6 Fe(II)-[cytochrome b5] + 3 O2 + 5 H(+) = 4alpha-carboxyzymosterol + 6 Fe(III)-[cytochrome b5] + 4 H2O. The catalysed reaction is 4alpha-methyl-5alpha-cholest-7-en-3beta-ol + 6 Fe(II)-[cytochrome b5] + 3 O2 + 5 H(+) = 4alpha-carboxy-5alpha-cholest-7-en-3beta-ol + 6 Fe(III)-[cytochrome b5] + 4 H2O. It carries out the reaction 4,4-dimethyl-5alpha-cholest-8-en-3beta-ol + 6 Fe(II)-[cytochrome b5] + 3 O2 + 5 H(+) = 4alpha-carboxy-4beta-methyl-5alpha-cholest-8-en-3beta-ol + 6 Fe(III)-[cytochrome b5] + 4 H2O. The enzyme catalyses 4alpha-methyl-5alpha-cholest-8-en-3beta-ol + 6 Fe(II)-[cytochrome b5] + 3 O2 + 5 H(+) = 4alpha-carboxy-5alpha-cholest-8-ene-3beta-ol + 6 Fe(III)-[cytochrome b5] + 4 H2O. It participates in steroid biosynthesis; zymosterol biosynthesis; zymosterol from lanosterol: step 3/6. It functions in the pathway steroid biosynthesis; cholesterol biosynthesis. Functionally, catalyzes the three-step monooxygenation required for the demethylation of 4,4-dimethyl and 4alpha-methylsterols, which can be subsequently metabolized to cholesterol. This chain is Methylsterol monooxygenase 1 (MSMO1), found in Macaca fascicularis (Crab-eating macaque).